The following is a 243-amino-acid chain: Benzil reductase ((S)-benzoin forming) (243 aa).

NADP(+) is bound by residues isoleucine 6, asparagine 80, tyrosine 147, lysine 151, and threonine 184. The active-site Proton acceptor is tyrosine 147.

It belongs to the short-chain dehydrogenases/reductases (SDR) family.

It localises to the cytoplasm. It catalyses the reaction (S)-benzoin + NADP(+) = benzil + NADPH + H(+). Reduces benzil stereospecifically to (S)-benzoin. The polypeptide is Benzil reductase ((S)-benzoin forming) (yueD) (Bacillus subtilis (strain 168)).